The following is a 114-amino-acid chain: Large ribosomal subunit protein uL18 (114 aa).

It belongs to the universal ribosomal protein uL18 family. Part of the 50S ribosomal subunit; part of the 5S rRNA/L5/L18/L25 subcomplex. Contacts the 5S and 23S rRNAs.

In terms of biological role, this is one of the proteins that bind and probably mediate the attachment of the 5S RNA into the large ribosomal subunit, where it forms part of the central protuberance. The polypeptide is Large ribosomal subunit protein uL18 (Bacteroides fragilis (strain ATCC 25285 / DSM 2151 / CCUG 4856 / JCM 11019 / LMG 10263 / NCTC 9343 / Onslow / VPI 2553 / EN-2)).